We begin with the raw amino-acid sequence, 503 residues long: Putative ribose/galactose/methyl galactoside import ATP-binding protein (503 aa).

ABC transporter domains are found at residues 7–244 (LEMI…VGRE) and 254–498 (VPIG…TGQL). ATP is bound at residue 39-46 (GENGAGKS).

It belongs to the ABC transporter superfamily. Carbohydrate importer 2 (CUT2) (TC 3.A.1.2) family.

It is found in the cell membrane. The enzyme catalyses D-ribose(out) + ATP + H2O = D-ribose(in) + ADP + phosphate + H(+). It carries out the reaction D-galactose(out) + ATP + H2O = D-galactose(in) + ADP + phosphate + H(+). In terms of biological role, part of an ABC transporter complex involved in carbohydrate import. Could be involved in ribose, galactose and/or methyl galactoside import. Responsible for energy coupling to the transport system. The protein is Putative ribose/galactose/methyl galactoside import ATP-binding protein of Geobacillus kaustophilus (strain HTA426).